The primary structure comprises 312 residues: uncharacterized protein (312 aa).

A signal peptide spans 1 to 19 (MFSKYLVTASSLFVALTSA).

This is an uncharacterized protein from Saccharomyces cerevisiae (strain ATCC 204508 / S288c) (Baker's yeast).